Reading from the N-terminus, the 384-residue chain is 8-amino-7-oxononanoate synthase (384 aa).

Residue Arg21 coordinates substrate. Residue 108-109 (GY) coordinates pyridoxal 5'-phosphate. A substrate-binding site is contributed by His133. Residues Ser179, His207, and Thr233 each coordinate pyridoxal 5'-phosphate. Residue Lys236 is modified to N6-(pyridoxal phosphate)lysine. Thr350 is a binding site for substrate.

It belongs to the class-II pyridoxal-phosphate-dependent aminotransferase family. BioF subfamily. As to quaternary structure, homodimer. Requires pyridoxal 5'-phosphate as cofactor.

It catalyses the reaction 6-carboxyhexanoyl-[ACP] + L-alanine + H(+) = (8S)-8-amino-7-oxononanoate + holo-[ACP] + CO2. It participates in cofactor biosynthesis; biotin biosynthesis. Its function is as follows. Catalyzes the decarboxylative condensation of pimeloyl-[acyl-carrier protein] and L-alanine to produce 8-amino-7-oxononanoate (AON), [acyl-carrier protein], and carbon dioxide. The protein is 8-amino-7-oxononanoate synthase of Buchnera aphidicola subsp. Baizongia pistaciae (strain Bp).